A 60-amino-acid polypeptide reads, in one-letter code: UPF0434 protein NMA0874 (60 aa).

This sequence belongs to the UPF0434 family.

This Neisseria meningitidis serogroup A / serotype 4A (strain DSM 15465 / Z2491) protein is UPF0434 protein NMA0874.